A 156-amino-acid polypeptide reads, in one-letter code: ATP synthase subunit b (156 aa).

Residues 11 to 31 form a helical membrane-spanning segment; the sequence is LIAFVVFVIFCMKYVWPPIIG.

It belongs to the ATPase B chain family. As to quaternary structure, F-type ATPases have 2 components, F(1) - the catalytic core - and F(0) - the membrane proton channel. F(1) has five subunits: alpha(3), beta(3), gamma(1), delta(1), epsilon(1). F(0) has three main subunits: a(1), b(2) and c(10-14). The alpha and beta chains form an alternating ring which encloses part of the gamma chain. F(1) is attached to F(0) by a central stalk formed by the gamma and epsilon chains, while a peripheral stalk is formed by the delta and b chains.

It is found in the cell inner membrane. F(1)F(0) ATP synthase produces ATP from ADP in the presence of a proton or sodium gradient. F-type ATPases consist of two structural domains, F(1) containing the extramembraneous catalytic core and F(0) containing the membrane proton channel, linked together by a central stalk and a peripheral stalk. During catalysis, ATP synthesis in the catalytic domain of F(1) is coupled via a rotary mechanism of the central stalk subunits to proton translocation. Its function is as follows. Component of the F(0) channel, it forms part of the peripheral stalk, linking F(1) to F(0). In Colwellia psychrerythraea (strain 34H / ATCC BAA-681) (Vibrio psychroerythus), this protein is ATP synthase subunit b.